The chain runs to 101 residues: Large ribosomal subunit protein eL31 (101 aa).

The protein belongs to the eukaryotic ribosomal protein eL31 family.

This is Large ribosomal subunit protein eL31 from Ignicoccus hospitalis (strain KIN4/I / DSM 18386 / JCM 14125).